A 297-amino-acid polypeptide reads, in one-letter code: Acetaldehyde dehydrogenase (297 aa).

15–18 (SGSI) lines the NAD(+) pocket. Residue Cys-130 is the Acyl-thioester intermediate of the active site. NAD(+) contacts are provided by residues 162-170 (SAGIATREN) and Asn-272.

It belongs to the acetaldehyde dehydrogenase family.

The enzyme catalyses acetaldehyde + NAD(+) + CoA = acetyl-CoA + NADH + H(+). The protein is Acetaldehyde dehydrogenase (mhpF) of Burkholderia pseudomallei (strain K96243).